The chain runs to 204 residues: Protein OPG030 (204 aa).

Positions 95–177 constitute a BACK domain; the sequence is FLRQYINNNI…ITYSELTNAI (83 aa).

It belongs to the orthopoxvirus OPG030 family.

The chain is Protein OPG030 (OPG30) from Homo sapiens (Human).